Here is a 184-residue protein sequence, read N- to C-terminus: Peptide deformylase (184 aa).

Residues C92 and H134 each coordinate Fe cation. Residue E135 is part of the active site. Fe cation is bound at residue H138.

It belongs to the polypeptide deformylase family. Fe(2+) is required as a cofactor.

It catalyses the reaction N-terminal N-formyl-L-methionyl-[peptide] + H2O = N-terminal L-methionyl-[peptide] + formate. In terms of biological role, removes the formyl group from the N-terminal Met of newly synthesized proteins. Requires at least a dipeptide for an efficient rate of reaction. N-terminal L-methionine is a prerequisite for activity but the enzyme has broad specificity at other positions. The polypeptide is Peptide deformylase (Psychrobacter cryohalolentis (strain ATCC BAA-1226 / DSM 17306 / VKM B-2378 / K5)).